The primary structure comprises 65 residues: LTCVKEKSIFGVTTEDCPDGQNLCFKRWHMIVPGRYKKTRGCAATCPIAENRDVIECCSTDKCNL.

4 disulfide bridges follow: Cys3/Cys24, Cys17/Cys42, Cys46/Cys57, and Cys58/Cys63.

It belongs to the three-finger toxin family. Short-chain subfamily. Type C muscarinic toxin sub-subfamily. In terms of assembly, monomer. In terms of tissue distribution, expressed by the venom gland.

Its subcellular location is the secreted. In Naja kaouthia (Monocled cobra), this protein is Muscarinic toxin-like protein 2.